A 348-amino-acid polypeptide reads, in one-letter code: S-adenosylmethionine-dependent nucleotide dehydratase RSAD2 (348 aa).

The Radical SAM core domain maps to 56–276; it reads SATPSSVNYH…LERHSSISCL (221 aa). [4Fe-4S] cluster-binding residues include cysteine 70, cysteine 74, and cysteine 77.

This sequence belongs to the radical SAM superfamily. RSAD2 family. Requires [4Fe-4S] cluster as cofactor. Expressed at low levels in spleen and head kidney.

It localises to the endoplasmic reticulum membrane. Functionally, interferon-inducible iron-sulfur (4FE-4S) cluster-binding antiviral protein which plays a major role in the cell antiviral state induced by type I and type II interferon. This Oncorhynchus mykiss (Rainbow trout) protein is S-adenosylmethionine-dependent nucleotide dehydratase RSAD2.